The sequence spans 109 residues: Enhancer of rudimentary homolog (109 aa).

This sequence belongs to the E(R) family. As to quaternary structure, homodimer.

Functionally, may have a role in the cell cycle. The sequence is that of Enhancer of rudimentary homolog from Arabidopsis thaliana (Mouse-ear cress).